The chain runs to 196 residues: Probable DNA-directed RNA polymerase subunit delta (196 aa).

In terms of domain architecture, HTH HARE-type spans 14-81; the sequence is LSMIEVAHEI…GDNVWGLRSW (68 aa). Positions 119 to 150 are enriched in acidic residues; that stretch reads DDDDVIDYDDDDPEDEDLDNDYDDEDDDDDEG. The tract at residues 119–196 is disordered; that stretch reads DDDDVIDYDD…DADLDEENQD (78 aa). The span at 151–161 shows a compositional bias: basic and acidic residues; that stretch reads SHELKQYTKDL. Acidic residues-rich tracts occupy residues 162–176 and 186–196; these read DDIDDGDDPEDELAD and SDADLDEENQD.

It belongs to the RpoE family. As to quaternary structure, RNAP is composed of a core of 2 alpha, a beta and a beta' subunits. The core is associated with a delta subunit and one of several sigma factors.

Participates in both the initiation and recycling phases of transcription. In the presence of the delta subunit, RNAP displays an increased specificity of transcription, a decreased affinity for nucleic acids, and an increased efficiency of RNA synthesis because of enhanced recycling. This is Probable DNA-directed RNA polymerase subunit delta from Ligilactobacillus salivarius (strain UCC118) (Lactobacillus salivarius).